The primary structure comprises 302 residues: Glutaminase (302 aa).

Residues S61, N111, E155, N162, Y186, Y238, and V256 each coordinate substrate.

This sequence belongs to the glutaminase family. In terms of assembly, homotetramer.

It carries out the reaction L-glutamine + H2O = L-glutamate + NH4(+). This Stutzerimonas stutzeri (strain A1501) (Pseudomonas stutzeri) protein is Glutaminase.